A 242-amino-acid polypeptide reads, in one-letter code: Zinc-finger homeodomain protein 11 (242 aa).

The ZF-HD dimerization-type; degenerate zinc-finger motif lies at 31 to 82; the sequence is YKECLKNHAANLGGHALDGCGEFMPSPTATSTDPSSLRCAACGCHRNFHRRD. Disordered regions lie at residues 83-109 and 135-161; these read PSEN…SRHV and PGPS…RTRT. Residues 156–213 constitute a DNA-binding region (homeobox; atypical); the sequence is RKRTRTKFTPEQKIKMRAFAEKAGWKINGCDEKSVREFCNEVGIERGVLKVWMHNNKY.

In terms of assembly, homo- and heterodimer with other ZFHD proteins. Interacts with HIPP20, HIPP21, HIPP22, HIPP23, HIPP24, HIPP26, HIPP27, HIPP30 and MED25 (via ACID domain). Interacts with NAC019, NAC055 and NAC072 (via NAC binding domain). Binds to ZHD1, ZHD2, ZHD3, ZHD4, ZHD5, ZHD6, ZHD7, ZHD8, ZHD9, ZHD12, ZHD13 and ZHD14. In terms of tissue distribution, expressed in roots, inflorescences, open flowers and seeds. Detected in stems and seedlings.

The protein localises to the nucleus. Its function is as follows. Transcription factor involved in the up-regulation of several stress-inducible genes. Acts as a transcriptional activator by interacting with MED25 and NAC proteins. Involved in increased drought tolerance. This chain is Zinc-finger homeodomain protein 11 (ZHD11), found in Arabidopsis thaliana (Mouse-ear cress).